An 865-amino-acid chain; its full sequence is Leucine--tRNA ligase (865 aa).

Residues Pro-58–His-68 carry the 'HIGH' region motif. The 'KMSKS' region signature appears at Lys-629–Ser-633. ATP is bound at residue Lys-632.

The protein belongs to the class-I aminoacyl-tRNA synthetase family.

It is found in the cytoplasm. The catalysed reaction is tRNA(Leu) + L-leucine + ATP = L-leucyl-tRNA(Leu) + AMP + diphosphate. The sequence is that of Leucine--tRNA ligase from Synechococcus sp. (strain ATCC 27144 / PCC 6301 / SAUG 1402/1) (Anacystis nidulans).